Here is a 753-residue protein sequence, read N- to C-terminus: Polyadenylate-binding protein, cytoplasmic and nuclear (753 aa).

Positions M1 to A26 are enriched in polar residues. The disordered stretch occupies residues M1–A52. Low complexity predominate over residues S37–A52. RRM domains follow at residues A52–R130, G140–S217, T233–K310, and V336–R460. Disordered stretches follow at residues V367 to K417 and M602 to V645. Basic and acidic residues predominate over residues E379–K417. Positions G605–G631 are enriched in gly residues. In terms of domain architecture, PABC spans T648 to K725. A disordered region spans residues G728–S753. A compositionally biased stretch (basic and acidic residues) spans A737–S753.

The protein belongs to the polyadenylate-binding protein type-1 family.

It is found in the cytoplasm. Its subcellular location is the nucleus. In terms of biological role, binds the poly(A) tail of mRNA. Appears to be an important mediator of the multiple roles of the poly(A) tail in mRNA biogenesis, stability and translation. In the nucleus, involved in both mRNA cleavage and polyadenylation. Is also required for efficient mRNA export to the cytoplasm. Acts in concert with a poly(A)-specific nuclease (PAN) to affect poly(A) tail shortening, which may occur concomitantly with either nucleocytoplasmic mRNA transport or translational initiation. In the cytoplasm, stimulates translation initiation and regulates mRNA decay through translation termination-coupled poly(A) shortening, probably mediated by PAN. This is Polyadenylate-binding protein, cytoplasmic and nuclear (pab1) from Aspergillus fumigatus (strain ATCC MYA-4609 / CBS 101355 / FGSC A1100 / Af293) (Neosartorya fumigata).